A 179-amino-acid chain; its full sequence is Ribosome maturation factor RimM (179 aa).

Residues 100–176 (KEEFHLLELI…FLIINPPNGL (77 aa)) enclose the PRC barrel domain.

It belongs to the RimM family. As to quaternary structure, binds ribosomal protein uS19.

It is found in the cytoplasm. In terms of biological role, an accessory protein needed during the final step in the assembly of 30S ribosomal subunit, possibly for assembly of the head region. Essential for efficient processing of 16S rRNA. May be needed both before and after RbfA during the maturation of 16S rRNA. It has affinity for free ribosomal 30S subunits but not for 70S ribosomes. This is Ribosome maturation factor RimM from Prochlorococcus marinus (strain MIT 9312).